The chain runs to 310 residues: Methionyl-tRNA formyltransferase (310 aa).

109 to 112 contacts (6S)-5,6,7,8-tetrahydrofolate; that stretch reads SLLP.

It belongs to the Fmt family.

It carries out the reaction L-methionyl-tRNA(fMet) + (6R)-10-formyltetrahydrofolate = N-formyl-L-methionyl-tRNA(fMet) + (6S)-5,6,7,8-tetrahydrofolate + H(+). In terms of biological role, attaches a formyl group to the free amino group of methionyl-tRNA(fMet). The formyl group appears to play a dual role in the initiator identity of N-formylmethionyl-tRNA by promoting its recognition by IF2 and preventing the misappropriation of this tRNA by the elongation apparatus. The chain is Methionyl-tRNA formyltransferase from Pseudomonas paraeruginosa (strain DSM 24068 / PA7) (Pseudomonas aeruginosa (strain PA7)).